The following is a 257-amino-acid chain: MQKVTIQEAEHLLQEIISEEDDRFQILIKDERKGVQKLISKWYKQKELAQKEKEKFLEMSKYENALREKGLTYIAGIDEVGRGPLAGPVVTAAVILPEDFYIPGLNDSKKLSEAKRERFYGEIKAKAIAIGVGIVSPQVIDEINIYQATKQAMLDAIANLSCTPEYLLIDAMKLPAPIPQTSIIKGDAKSISISAASIIAKVTRDRMMKELGEKYPAYGFEQHMGYGTKQHLEAIEAHGVLEEHRKSFAPIKDMIKK.

One can recognise an RNase H type-2 domain in the interval 72–257; the sequence is TYIAGIDEVG…FAPIKDMIKK (186 aa). Residues Asp-78, Glu-79, and Asp-170 each coordinate a divalent metal cation.

The protein belongs to the RNase HII family. Requires Mn(2+) as cofactor. Mg(2+) serves as cofactor.

It is found in the cytoplasm. The catalysed reaction is Endonucleolytic cleavage to 5'-phosphomonoester.. Endonuclease that specifically degrades the RNA of RNA-DNA hybrids. The polypeptide is Ribonuclease HII (Bacillus anthracis (strain A0248)).